The following is a 339-amino-acid chain: Transcription initiation factor IIB (339 aa).

A TFIIB-type zinc finger spans residues 39–70; that stretch reads EELICPMCGSKNIIKDYERAEIVCETCGCVLQ. Zn(2+) contacts are provided by cysteine 43, cysteine 46, cysteine 62, and cysteine 65. 2 consecutive repeat copies span residues 156–239 and 250–331.

The protein belongs to the TFIIB family.

Stabilizes TBP binding to an archaeal box-A promoter. Also responsible for recruiting RNA polymerase II to the pre-initiation complex (DNA-TBP-TFIIB). The sequence is that of Transcription initiation factor IIB from Methanothermococcus thermolithotrophicus (Methanococcus thermolithotrophicus).